The chain runs to 529 residues: Probable DNA helicase MPN_340 (529 aa).

A UvrD-like helicase ATP-binding domain is found at 2–285 (EHLNQEQKAA…FYTTQNYRSI (284 aa)). Position 23-30 (23-30 (SGAGTGKT)) interacts with ATP.

Belongs to the helicase family. UvrD subfamily.

The enzyme catalyses Couples ATP hydrolysis with the unwinding of duplex DNA by translocating in the 3'-5' direction.. The catalysed reaction is ATP + H2O = ADP + phosphate + H(+). The polypeptide is Probable DNA helicase MPN_340 (Mycoplasma pneumoniae (strain ATCC 29342 / M129 / Subtype 1) (Mycoplasmoides pneumoniae)).